The chain runs to 424 residues: Enolase (424 aa).

Glutamine 162 serves as a coordination point for (2R)-2-phosphoglycerate. The active-site Proton donor is the glutamate 204. 3 residues coordinate Mg(2+): aspartate 241, glutamate 284, and aspartate 311. (2R)-2-phosphoglycerate-binding residues include lysine 336, arginine 365, serine 366, and lysine 387. The Proton acceptor role is filled by lysine 336.

It belongs to the enolase family. The cofactor is Mg(2+).

It is found in the cytoplasm. The protein resides in the secreted. The protein localises to the cell surface. The catalysed reaction is (2R)-2-phosphoglycerate = phosphoenolpyruvate + H2O. It functions in the pathway carbohydrate degradation; glycolysis; pyruvate from D-glyceraldehyde 3-phosphate: step 4/5. In terms of biological role, catalyzes the reversible conversion of 2-phosphoglycerate (2-PG) into phosphoenolpyruvate (PEP). It is essential for the degradation of carbohydrates via glycolysis. The polypeptide is Enolase (Rhizobium etli (strain ATCC 51251 / DSM 11541 / JCM 21823 / NBRC 15573 / CFN 42)).